The chain runs to 211 residues: FMN-dependent NADH:quinone oxidoreductase (211 aa).

FMN contacts are provided by residues serine 10, 16-18 (STS), and 138-141 (TQGG).

This sequence belongs to the azoreductase type 1 family. In terms of assembly, homodimer. The cofactor is FMN.

The enzyme catalyses 2 a quinone + NADH + H(+) = 2 a 1,4-benzosemiquinone + NAD(+). It catalyses the reaction N,N-dimethyl-1,4-phenylenediamine + anthranilate + 2 NAD(+) = 2-(4-dimethylaminophenyl)diazenylbenzoate + 2 NADH + 2 H(+). In terms of biological role, quinone reductase that provides resistance to thiol-specific stress caused by electrophilic quinones. Functionally, also exhibits azoreductase activity. Catalyzes the reductive cleavage of the azo bond in aromatic azo compounds to the corresponding amines. The protein is FMN-dependent NADH:quinone oxidoreductase of Frankia alni (strain DSM 45986 / CECT 9034 / ACN14a).